The primary structure comprises 169 residues: Shikimate kinase (169 aa).

An ATP-binding site is contributed by 13–18; that stretch reads GAGKST. S17 contacts Mg(2+). D35, R59, and G80 together coordinate substrate. ATP is bound at residue R117. A substrate-binding site is contributed by R136. An ATP-binding site is contributed by R153.

Belongs to the shikimate kinase family. Monomer. Mg(2+) serves as cofactor.

The protein localises to the cytoplasm. The catalysed reaction is shikimate + ATP = 3-phosphoshikimate + ADP + H(+). It participates in metabolic intermediate biosynthesis; chorismate biosynthesis; chorismate from D-erythrose 4-phosphate and phosphoenolpyruvate: step 5/7. Functionally, catalyzes the specific phosphorylation of the 3-hydroxyl group of shikimic acid using ATP as a cosubstrate. This is Shikimate kinase from Corynebacterium efficiens (strain DSM 44549 / YS-314 / AJ 12310 / JCM 11189 / NBRC 100395).